We begin with the raw amino-acid sequence, 1325 residues long: Cyclic nucleotide-gated channel beta-1 (1325 aa).

Disordered regions lie at residues 1–124, 147–198, 227–279, 340–470, 482–637, and 659–694; these read MLGW…QVAV, PQPV…SLWL, AVLD…PGDP, WEDA…LDSC, LERT…SQNS, and KEKLIDPDVTSDEESPKPSPAKKAPEPDPAQKPAEA. Over 1–732 the chain is Cytoplasmic; sequence MLGWVQRVLP…SIDPLTNLMY (732 aa). The span at 43 to 81 shows a compositional bias: acidic residues; sequence PQQEPEPEPEPEPEPEPEPEPEPEPEPEPEPEPVPEEAP. A compositionally biased stretch (polar residues) spans 105-121; sequence LQETQVADPAQPTSQAQ. Residues 370–379 are compositionally biased toward basic and acidic residues; it reads IPRELTKIQE. Composition is skewed to acidic residues over residues 380-393, 418-463, and 495-517; these read EREDEQEEDEEEKE, EEKE…EEEP, and LPEEKEEKEEEKEEEKEEEEEKK. Over residues 518-527 the composition is skewed to basic and acidic residues; the sequence is EEEVEKKEEG. Over residues 560 to 571 the composition is skewed to pro residues; sequence TLPPPERPPPSP. The interval 633–643 is calmodulin-binding CaM1; it reads ASQNSAIINDR. A helical transmembrane segment spans residues 733–754; it reads ILWLFFVVLAWNWNCWLIPVRW. Residues 755–763 are Extracellular-facing; that stretch reads AFPYQRADN. Residues 764-785 form a helical membrane-spanning segment; the sequence is IHFWLLMDYLCDFIYLLDITVF. Over 786 to 800 the chain is Cytoplasmic; the sequence is QMRLQFVKGGDIITD. A helical membrane pass occupies residues 801–820; sequence KKEMRNNYLKSRRFKMDLLC. Residues 821–836 are Extracellular-facing; sequence LLPLDFLYLKLGINPL. A helical transmembrane segment spans residues 837–849; that stretch reads LRLPRCLKYMAFF. The Cytoplasmic segment spans residues 850-861; sequence EFNNRLEAILSK. A helical membrane pass occupies residues 862-884; that stretch reads AYVYRVIRTTAYLLYSLHLNSCL. The ion conduction pathway stretch occupies residues 862-961; the sequence is AYVYRVIRTT…IGQMRDVVGA (100 aa). The Extracellular segment spans residues 885–907; that stretch reads YYWASAFQGIGSTHWVYDGVGNS. A run of 2 helical transmembrane segments spans residues 908-934 and 935-960; these read YIRCYYWAVKTLITIGGLPDPQTLFEI and VFQLLNYFTGVFAFSVMIGQMRDVVG. The Cytoplasmic portion of the chain corresponds to 961–1325; the sequence is AATAGQTYYR…VLEEKKEGAE (365 aa). The C-linker stretch occupies residues 964 to 1040; it reads AGQTYYRSCM…SIVSKVALFQ (77 aa). Positions 1038-1142 are cNMP-binding domain; the sequence is LFQGCDRQMI…LDKKDLNEIL (105 aa). The cyclic nucleotide-binding domain stretch occupies residues 1044 to 1160; the sequence is RQMIFDMLKR…LLRKKARRML (117 aa). The 3',5'-cyclic GMP site is built by glycine 1105, glutamate 1106, serine 1108, arginine 1118, and threonine 1119. Arginine 1118 contributes to the 3',5'-cyclic AMP binding site. Residues 1224-1230 are calmodulin-binding CaM2; it reads QQQLLEQ. Over residues 1226 to 1250 the composition is skewed to low complexity; sequence QLLEQAKSSQEAGGEEGSGATDQPA. The disordered stretch occupies residues 1226–1325; the sequence is QLLEQAKSSQ…VLEEKKEGAE (100 aa). Residues 1262–1279 are compositionally biased toward pro residues; the sequence is KPPGPPEPSAQSSPPPAS.

This sequence belongs to the cyclic nucleotide-gated cation channel (TC 1.A.1.5) family. CNGB1 subfamily. As to expression, rod outer segments. Olfactory sensory neurons.

The protein localises to the cell projection. Its subcellular location is the cilium membrane. The catalysed reaction is Ca(2+)(in) = Ca(2+)(out). The enzyme catalyses Na(+)(in) = Na(+)(out). It carries out the reaction K(+)(in) = K(+)(out). It catalyses the reaction NH4(+)(in) = NH4(+)(out). The catalysed reaction is Rb(+)(in) = Rb(+)(out). The enzyme catalyses Li(+)(in) = Li(+)(out). It carries out the reaction Cs(+)(in) = Cs(+)(out). Its function is as follows. Pore-forming subunit of the rod cyclic nucleotide-gated channel. Mediates rod photoresponses at dim light converting transient changes in intracellular cGMP levels into electrical signals. In the dark, cGMP levels are high and keep the channel open enabling a steady inward current carried by Na(+) and Ca(2+) ions that leads to membrane depolarization and neurotransmitter release from synaptic terminals. Upon photon absorption cGMP levels decline leading to channel closure and membrane hyperpolarization that ultimately slows neurotransmitter release and signals the presence of light, the end point of the phototransduction cascade. Pore-forming subunit of the olfactory cyclic nucleotide-gated channel. Operates in the cilia of olfactory sensory neurons where chemical stimulation of the odorant is converted to an electrical signal. Mediates odorant-induced cAMP-dependent Ca(2+) influx triggering neuron depolarization. The rise of intracellular Ca(2+) levels potentiates the olfactory response by activating Ca(2+)-dependent Cl(-) channels, but it also serves as a negative feedback signal to desensitize the channel for rapid adaptation to odorants. Conducts cGMP- and cAMP-gated ion currents, with permeability for monovalent and divalent cations. The selectivity for Ca(2+) over Na(+) increases with cGMP concentrations, whereas the selectivity among monovalent ions is independent of the cGMP levels. This is Cyclic nucleotide-gated channel beta-1 from Mus musculus (Mouse).